Consider the following 349-residue polypeptide: DNA polymerase IV (349 aa).

The region spanning 4–185 (IIHIDCDCFY…LPVAKLHGVG (182 aa)) is the UmuC domain. Mg(2+) is bound by residues D8 and D103. Residue E104 is part of the active site.

Belongs to the DNA polymerase type-Y family. Monomer. It depends on Mg(2+) as a cofactor.

It is found in the cytoplasm. The enzyme catalyses DNA(n) + a 2'-deoxyribonucleoside 5'-triphosphate = DNA(n+1) + diphosphate. Its function is as follows. Poorly processive, error-prone DNA polymerase involved in untargeted mutagenesis. Copies undamaged DNA at stalled replication forks, which arise in vivo from mismatched or misaligned primer ends. These misaligned primers can be extended by PolIV. Exhibits no 3'-5' exonuclease (proofreading) activity. May be involved in translesional synthesis, in conjunction with the beta clamp from PolIII. This Pseudomonas paraeruginosa (strain DSM 24068 / PA7) (Pseudomonas aeruginosa (strain PA7)) protein is DNA polymerase IV.